A 258-amino-acid chain; its full sequence is Proliferating cell nuclear antigen (258 aa).

Residues 61 to 80 (RCDHPVTLGMDLTSLSKILR) mediate DNA binding. A Glycyl lysine isopeptide (Lys-Gly) (interchain with G-Cter in SUMO) cross-link involves residue K127. K164 is covalently cross-linked (Glycyl lysine isopeptide (Lys-Gly) (interchain with G-Cter in SUMO); alternate). K164 is covalently cross-linked (Glycyl lysine isopeptide (Lys-Gly) (interchain with G-Cter in ubiquitin); alternate).

Belongs to the PCNA family. In terms of assembly, homotrimer. Interacts with RAD30. Interacts with MCM10. Interacts with UBP10. In terms of processing, sumoylated on Lys-164, and to a lesser extent on Lys-127 by the UBC9/SIZ1 complex during S-phase; which impairs ubiquitination and function in DNA repair. Monoubiquitinated on Lys-164 by the UBC2/RAD18 complex upon DNA damage, and then polyubiquitinated through 'Lys-63'-linkage by UBC13/MMS2. Ubiquitination is required for UBC2-mediated DNA repair. Post-translationally, lys-164 is deubiquitinated by UBP10.

The protein localises to the nucleus. Functionally, this protein is an auxiliary protein of DNA polymerase delta and is involved in the control of eukaryotic DNA replication by increasing the polymerase's processibility during elongation of the leading strand. Involved in DNA repair. This Saccharomyces cerevisiae (strain ATCC 204508 / S288c) (Baker's yeast) protein is Proliferating cell nuclear antigen (POL30).